Reading from the N-terminus, the 135-residue chain is Small ribosomal subunit protein bS6 (135 aa).

Residues 99–120 are compositionally biased toward polar residues; that stretch reads QHSSLGRSTAPANPMASNTPRT. The interval 99 to 135 is disordered; it reads QHSSLGRSTAPANPMASNTPRTEGQEQAKTEPQTAPA.

Belongs to the bacterial ribosomal protein bS6 family.

Binds together with bS18 to 16S ribosomal RNA. This is Small ribosomal subunit protein bS6 from Synechococcus sp. (strain RCC307).